A 395-amino-acid chain; its full sequence is uncharacterized protein (395 aa).

The stretch at lysine 182–lysine 238 forms a coiled coil.

This is an uncharacterized protein from Acanthamoeba polyphaga (Amoeba).